The primary structure comprises 481 residues: RAC-alpha serine/threonine-protein kinase (481 aa).

Residues 5-108 form the PH domain; it reads AIVKEGWLHK…WIQVIQHVAD (104 aa). Residues 120–141 form a disordered region; that stretch reads VRSGDSPSDNSGAEEMEVSHSK. Residues Ser127 and Ser130 are each glycosylated (O-linked (GlcNAc) serine). A Protein kinase domain is found at 151-409; it reads FEYLKLLGKG…AKEIMQHKFF (259 aa). ATP is bound by residues 157–165 and Lys180; that span reads LGKGTFGKV. Asp275 (proton acceptor) is an active-site residue. Thr306 is a glycosylation site (O-linked (GlcNAc) threonine). A Phosphothreonine; by PDPK1 modification is found at Thr309. Thr313 carries O-linked (GlcNAc) threonine glycosylation. Residues 410–481 form the AGC-kinase C-terminal domain; that stretch reads AGIVWQDVYE…QFSYSASGNA (72 aa). Phosphoserine is present on Ser474. O-linked (GlcNAc) serine; alternate glycosylation occurs at Ser474. Tyr475 carries the post-translational modification Phosphotyrosine.

This sequence belongs to the protein kinase superfamily. AGC Ser/Thr protein kinase family. RAC subfamily. In terms of processing, cleavage by caspase-3/CASP3. Cleaved at the caspase-3 consensus site Asp-463 during apoptosis, resulting in down-regulation of the AKT signaling pathway and decreased cell survival. Post-translationally, phosphorylation on Thr-309 and Ser-474 is required for full activity. Phosphorylation of the activation loop at Thr-309 by PDPK1/PDK1 is a prerequisite for full activation. Phosphorylation by mTORC2 at Ser-474 in response to growth factors plays a key role in AKT1 activation by facilitating subsequent phosphorylation of the activation loop by PDPK1/PDK1. Expressed in the oocyte.

The protein resides in the cytoplasm. It is found in the nucleus. The enzyme catalyses L-seryl-[protein] + ATP = O-phospho-L-seryl-[protein] + ADP + H(+). It carries out the reaction L-threonyl-[protein] + ATP = O-phospho-L-threonyl-[protein] + ADP + H(+). Activated in response to insulin. Three specific sites, one in the kinase domain (Thr-309) and the two other ones in the C-terminal regulatory region (Ser-474 and Tyr-475), need to be phosphorylated for its full activation. Its function is as follows. AKT1 is one of several closely related serine/threonine-protein kinases known as the AKT kinase, and which regulate many processes including metabolism, proliferation, cell survival, growth and angiogenesis. This is mediated through serine and/or threonine phosphorylation of a range of downstream substrates. Over 100 substrate candidates have been reported so far, but for most of them, no isoform specificity has been reported. Signals downstream of phosphatidylinositol 3-kinase (PI(3)K) to mediate the effects of various growth factors such as platelet-derived growth factor (PDGF), epidermal growth factor (EGF), insulin and insulin-like growth factor 1 (IGF1). Plays a role as a key modulator of the AKT-mTOR signaling pathway controlling the tempo of the process of newborn neurons integration during adult neurogenesis, including correct neuron positioning, dendritic development and synapse formation. Plays a role in glucose transport by mediating insulin-induced translocation of the GLUT4 glucose transporter to the cell surface. Mediates the antiapoptotic effects of IGF1. Mediates insulin-stimulated protein synthesis, partly by playing a role in both insulin-induced phosphorylation of 4E-BP1 and in insulin-induced activation of p70 S6 kinase. Promotes glycogen synthesis by mediating the insulin-induced activation of glycogen synthase. Required for insulin-stimulated meiotic reinitiation during oocyte maturation. May be involved in the regulation of vesicular functions such as preciliary trafficking and endocytic recycling. The sequence is that of RAC-alpha serine/threonine-protein kinase from Xenopus laevis (African clawed frog).